The following is a 147-amino-acid chain: Probable disulfide formation protein (147 aa).

A helical membrane pass occupies residues 9–28; sequence NYSLYFAWLTALIATLGSLY. Cysteine 38 and cysteine 41 are disulfide-bonded. 2 consecutive transmembrane segments (helical) span residues 43 to 62 and 69 to 86; these read YQRV…AYRT and YALP…YQYL. Cysteine 99 and cysteine 106 are disulfide-bonded. The helical transmembrane segment at 115–138 threads the bilayer; it reads GFITLPFLGMLATLIMSFFLIMAF.

Belongs to the DsbB family. BdbC subfamily.

It is found in the cell inner membrane. Functionally, required for disulfide bond formation in some proteins. The protein is Probable disulfide formation protein of Coxiella burnetii (strain CbuG_Q212) (Coxiella burnetii (strain Q212)).